The sequence spans 119 residues: Phytosulfokines 2 (119 aa).

The first 34 residues, 1 to 34 (MSTTRGVSSSSAAAALALLLLFALCFFSFHFAAA), serve as a signal peptide directing secretion. A propeptide spanning residues 35–109 (ARAVPRDEHQ…RRLLSDAHLD (75 aa)) is cleaved from the precursor. Sulfotyrosine occurs at positions 110 and 112. Positions 115-119 (HKNKP) are excised as a propeptide.

This sequence belongs to the phytosulfokine family. Sulfation is important for activity and for the binding to a putative membrane receptor. In terms of processing, PSK-alpha is produced by endopeptidase digestion. PSK-beta is produced from PSK-alpha by exopeptidase digestion.

The protein localises to the secreted. Functionally, promotes plant cell differentiation, organogenesis and somatic embryogenesis as well as cell proliferation. The polypeptide is Phytosulfokines 2 (PSK2) (Oryza sativa subsp. japonica (Rice)).